The sequence spans 489 residues: Amino acid transporter AVT6E (489 aa).

The next 11 membrane-spanning stretches (helical) occupy residues 76–96 (GIYG…IMAL), 102–122 (VLGL…SEIS), 156–176 (ICII…MGDV), 201–221 (VLIL…NKID), 227–247 (SAAS…VATI), 269–289 (ILDL…HFNV), 310–330 (ITTA…YLLF), 357–377 (IVRI…HFSL), 404–424 (VVLL…WTAF), 425–445 (KFTG…LIAL), and 461–481 (VSWL…IGNI).

The protein belongs to the amino acid/polyamine transporter 2 family. Amino acid/auxin permease (AAAP) (TC 2.A.18.6) subfamily.

The protein localises to the endoplasmic reticulum membrane. Its subcellular location is the vacuole membrane. In Arabidopsis thaliana (Mouse-ear cress), this protein is Amino acid transporter AVT6E.